The chain runs to 153 residues: ATP synthase subunit b' (153 aa).

The chain crosses the membrane as a helical span at residues 20–40 (TLPLMAVQVVLLTFILNALFF).

It belongs to the ATPase B chain family. F-type ATPases have 2 components, F(1) - the catalytic core - and F(0) - the membrane proton channel. F(1) has five subunits: alpha(3), beta(3), gamma(1), delta(1), epsilon(1). F(0) has four main subunits: a(1), b(1), b'(1) and c(10-14). The alpha and beta chains form an alternating ring which encloses part of the gamma chain. F(1) is attached to F(0) by a central stalk formed by the gamma and epsilon chains, while a peripheral stalk is formed by the delta, b and b' chains.

It is found in the cellular thylakoid membrane. Its function is as follows. F(1)F(0) ATP synthase produces ATP from ADP in the presence of a proton or sodium gradient. F-type ATPases consist of two structural domains, F(1) containing the extramembraneous catalytic core and F(0) containing the membrane proton channel, linked together by a central stalk and a peripheral stalk. During catalysis, ATP synthesis in the catalytic domain of F(1) is coupled via a rotary mechanism of the central stalk subunits to proton translocation. Functionally, component of the F(0) channel, it forms part of the peripheral stalk, linking F(1) to F(0). The b'-subunit is a diverged and duplicated form of b found in plants and photosynthetic bacteria. In Prochlorococcus marinus (strain NATL2A), this protein is ATP synthase subunit b'.